A 106-amino-acid chain; its full sequence is Iron-sulfur cluster assembly protein CyaY (106 aa).

It belongs to the frataxin family.

In terms of biological role, involved in iron-sulfur (Fe-S) cluster assembly. May act as a regulator of Fe-S biogenesis. The polypeptide is Iron-sulfur cluster assembly protein CyaY (Salmonella dublin (strain CT_02021853)).